Consider the following 360-residue polypeptide: Phospho-N-acetylmuramoyl-pentapeptide-transferase (360 aa).

A run of 10 helical transmembrane segments spans residues 21–41, 73–93, 94–114, 132–152, 168–188, 199–219, 239–259, 263–283, 288–308, and 338–358; these read YITV…LWIG, TMGG…WANL, ANPY…IGFV, WKYF…YWLG, IMPQ…VGTG, GLAI…AWAT, VVVF…FNTY, VFMG…VAIL, FLLV…ILQV, and VIIR…VTLK.

The protein belongs to the glycosyltransferase 4 family. MraY subfamily. Mg(2+) serves as cofactor.

Its subcellular location is the cell inner membrane. It catalyses the reaction UDP-N-acetyl-alpha-D-muramoyl-L-alanyl-gamma-D-glutamyl-meso-2,6-diaminopimeloyl-D-alanyl-D-alanine + di-trans,octa-cis-undecaprenyl phosphate = di-trans,octa-cis-undecaprenyl diphospho-N-acetyl-alpha-D-muramoyl-L-alanyl-D-glutamyl-meso-2,6-diaminopimeloyl-D-alanyl-D-alanine + UMP. Its pathway is cell wall biogenesis; peptidoglycan biosynthesis. Its function is as follows. Catalyzes the initial step of the lipid cycle reactions in the biosynthesis of the cell wall peptidoglycan: transfers peptidoglycan precursor phospho-MurNAc-pentapeptide from UDP-MurNAc-pentapeptide onto the lipid carrier undecaprenyl phosphate, yielding undecaprenyl-pyrophosphoryl-MurNAc-pentapeptide, known as lipid I. The sequence is that of Phospho-N-acetylmuramoyl-pentapeptide-transferase from Haemophilus influenzae (strain ATCC 51907 / DSM 11121 / KW20 / Rd).